A 224-amino-acid chain; its full sequence is Large ribosomal subunit protein uL4 (224 aa).

The segment at 52 to 109 is disordered; the sequence is AAARQGTHSTKTRGDVSGGGRKPYRQKGTGRARQGSTRTPQFTGGGVVHGPKPRDYSQ.

This sequence belongs to the universal ribosomal protein uL4 family. Part of the 50S ribosomal subunit.

One of the primary rRNA binding proteins, this protein initially binds near the 5'-end of the 23S rRNA. It is important during the early stages of 50S assembly. It makes multiple contacts with different domains of the 23S rRNA in the assembled 50S subunit and ribosome. Its function is as follows. Forms part of the polypeptide exit tunnel. This is Large ribosomal subunit protein uL4 from Mycobacterium ulcerans (strain Agy99).